Here is a 337-residue protein sequence, read N- to C-terminus: Palmitoyltransferase ZDHHC15 (337 aa).

Residues Met1–Leu20 are Cytoplasmic-facing. The helical transmembrane segment at Ser21 to Phe41 threads the bilayer. The Lumenal segment spans residues Glu42–Ile56. The helical transmembrane segment at Tyr57–Phe77 threads the bilayer. The Cytoplasmic portion of the chain corresponds to Thr78–Lys172. One can recognise a DHHC domain in the interval Arg129–Ala179. Cys131, Cys134, His144, Cys145, Cys148, Cys151, and His158 together coordinate Zn(2+). Cys159 acts as the S-palmitoyl cysteine intermediate in catalysis. Cys165 lines the Zn(2+) pocket. A helical transmembrane segment spans residues Phe173–Phe193. Topologically, residues Ser194–Lys210 are lumenal. Residues Phe211–His234 form a helical membrane-spanning segment. Over Cys235 to Thr337 the chain is Cytoplasmic. Residues His293–Thr337 form a disordered region. The segment covering Glu312–Asp323 has biased composition (acidic residues).

It belongs to the DHHC palmitoyltransferase family. Post-translationally, autopalmitoylated (in vitro). As to expression, in brain, expressed in both excitatory and inhibitory neurons but not expressed by glial cells.

It localises to the golgi apparatus membrane. The protein localises to the postsynaptic density. It carries out the reaction L-cysteinyl-[protein] + hexadecanoyl-CoA = S-hexadecanoyl-L-cysteinyl-[protein] + CoA. It catalyses the reaction L-cysteinyl-[protein] + tetradecanoyl-CoA = S-tetradecanoyl-L-cysteinyl-[protein] + CoA. The enzyme catalyses L-cysteinyl-[protein] + octadecanoyl-CoA = S-octadecanoyl-L-cysteinyl-[protein] + CoA. Its function is as follows. Palmitoyltransferase that catalyzes the addition of palmitate onto various protein substrates. Has no stringent fatty acid selectivity and in addition to palmitate can also transfer onto target proteins myristate from tetradecanoyl-CoA and stearate from octadecanoyl-CoA. Palmitoylates IGF2R and SORT1, promoting their partitioning to an endosomal membrane subdomain where they can interact with the retromer cargo-selective complex. Thereby, regulates retrograde transport from endosomes to the Golgi apparatus of these lysosomal sorting receptors and plays a role in trafficking of lysosomal proteins. In the nervous system, catalyzes the palmitoylation of DLG4/PSD95 and regulates its synaptic clustering and function in synaptogenesis. Could be involved in the differentiation of dopaminergic neurons and the development of the diencephalon. Could also catalyze the palmitoylation of GAP43. Could also palmitoylate DNAJC5 and regulate its localization to the Golgi membrane. Could also palmitoylate FYN as shown in vitro. May palmitoylate CALHM3 subunit of gustatory voltage-gated ion channels and modulate channel gating and kinetics. This is Palmitoyltransferase ZDHHC15 from Rattus norvegicus (Rat).